A 156-amino-acid polypeptide reads, in one-letter code: uncharacterized protein (156 aa).

The next 5 helical transmembrane spans lie at leucine 6–alanine 26, phenylalanine 34–proline 54, cysteine 68–isoleucine 88, tryptophan 100–leucine 120, and phenylalanine 129–glutamate 149.

Its subcellular location is the cell membrane. This is an uncharacterized protein from Methanocaldococcus jannaschii (strain ATCC 43067 / DSM 2661 / JAL-1 / JCM 10045 / NBRC 100440) (Methanococcus jannaschii).